Reading from the N-terminus, the 407-residue chain is Arginine deiminase (407 aa).

Cys397 acts as the Amidino-cysteine intermediate in catalysis.

This sequence belongs to the arginine deiminase family.

It localises to the cytoplasm. It catalyses the reaction L-arginine + H2O = L-citrulline + NH4(+). The protein operates within amino-acid degradation; L-arginine degradation via ADI pathway; carbamoyl phosphate from L-arginine: step 1/2. In Listeria welshimeri serovar 6b (strain ATCC 35897 / DSM 20650 / CCUG 15529 / CIP 8149 / NCTC 11857 / SLCC 5334 / V8), this protein is Arginine deiminase.